We begin with the raw amino-acid sequence, 283 residues long: Glutamate racemase (283 aa).

Residues 28-29 (DS) and 60-61 (YG) contribute to the substrate site. The Proton donor/acceptor role is filled by Cys92. Substrate is bound at residue 93 to 94 (NT). Cys204 serves as the catalytic Proton donor/acceptor. 205-206 (TH) contributes to the substrate binding site.

Belongs to the aspartate/glutamate racemases family.

The enzyme catalyses L-glutamate = D-glutamate. Its pathway is cell wall biogenesis; peptidoglycan biosynthesis. Its function is as follows. Provides the (R)-glutamate required for cell wall biosynthesis. The protein is Glutamate racemase of Salmonella gallinarum (strain 287/91 / NCTC 13346).